The following is a 208-amino-acid chain: MIVELSHPLIKHKVNTARIQDTSAEKLRKTLKELGFMLVYEALKDILLEEKEVRTWIGNKRFNYLNEEEIVFVPILRAGLSFLEGALQVVPNAKVGFLGIKRNEETLESHIYYSRLPELKGKIVVILDPMLATGGTLEVALREILKHSPLKVKSVHAIAAPEGLKRIEEKFKEVEIFVGNVDERLNDKGYIIPGLGDIGDRLYAVSVY.

Residues R77, R102, and 128–136 (DPMLATGGT) each bind 5-phospho-alpha-D-ribose 1-diphosphate. Residues I191 and 196–198 (GDI) contribute to the uracil site. D197 serves as a coordination point for 5-phospho-alpha-D-ribose 1-diphosphate.

This sequence belongs to the UPRTase family. The cofactor is Mg(2+).

It carries out the reaction UMP + diphosphate = 5-phospho-alpha-D-ribose 1-diphosphate + uracil. The protein operates within pyrimidine metabolism; UMP biosynthesis via salvage pathway; UMP from uracil: step 1/1. With respect to regulation, allosterically activated by GTP. Catalyzes the conversion of uracil and 5-phospho-alpha-D-ribose 1-diphosphate (PRPP) to UMP and diphosphate. This is Uracil phosphoribosyltransferase from Aquifex aeolicus (strain VF5).